A 180-amino-acid polypeptide reads, in one-letter code: Large ribosomal subunit protein uL6 (180 aa).

Belongs to the universal ribosomal protein uL6 family. In terms of assembly, part of the 50S ribosomal subunit.

Functionally, this protein binds to the 23S rRNA, and is important in its secondary structure. It is located near the subunit interface in the base of the L7/L12 stalk, and near the tRNA binding site of the peptidyltransferase center. The chain is Large ribosomal subunit protein uL6 from Caldanaerobacter subterraneus subsp. tengcongensis (strain DSM 15242 / JCM 11007 / NBRC 100824 / MB4) (Thermoanaerobacter tengcongensis).